Here is a 182-residue protein sequence, read N- to C-terminus: UPF0316 protein lp_1140 (182 aa).

3 consecutive transmembrane segments (helical) span residues 1 to 21 (MHID…YITL), 36 to 56 (FAAF…SLVL), and 62 to 82 (PINL…GMVI).

Belongs to the UPF0316 family.

It localises to the cell membrane. In Lactiplantibacillus plantarum (strain ATCC BAA-793 / NCIMB 8826 / WCFS1) (Lactobacillus plantarum), this protein is UPF0316 protein lp_1140.